A 459-amino-acid chain; its full sequence is Ribosomal protein uS12 methylthiotransferase RimO (459 aa).

The segment at 1–28 is disordered; the sequence is MSTNPPDLRPDLAPKARLTQPDRPGQPT. The 111-residue stretch at 27–137 folds into the MTTase N-terminal domain; the sequence is PTIGMVSLGC…VLDAVHAAVP (111 aa). The [4Fe-4S] cluster site is built by Cys-36, Cys-72, Cys-101, Cys-168, Cys-172, and Cys-175. Residues 154 to 387 form the Radical SAM core domain; it reads LTPRHFSYLK…MAKSQDISEA (234 aa). The TRAM domain maps to 390–457; sequence AAKVAQRLEV…EYDLWGRLAP (68 aa).

The protein belongs to the methylthiotransferase family. RimO subfamily. [4Fe-4S] cluster is required as a cofactor.

The protein resides in the cytoplasm. The enzyme catalyses L-aspartate(89)-[ribosomal protein uS12]-hydrogen + (sulfur carrier)-SH + AH2 + 2 S-adenosyl-L-methionine = 3-methylsulfanyl-L-aspartate(89)-[ribosomal protein uS12]-hydrogen + (sulfur carrier)-H + 5'-deoxyadenosine + L-methionine + A + S-adenosyl-L-homocysteine + 2 H(+). Functionally, catalyzes the methylthiolation of an aspartic acid residue of ribosomal protein uS12. In Roseobacter denitrificans (strain ATCC 33942 / OCh 114) (Erythrobacter sp. (strain OCh 114)), this protein is Ribosomal protein uS12 methylthiotransferase RimO.